The chain runs to 364 residues: tRNA/tmRNA (uracil-C(5))-methyltransferase (364 aa).

Residues Gln186, Tyr214, Asn219, Glu235, and Asp295 each contribute to the S-adenosyl-L-methionine site. The Nucleophile role is filled by Cys320. Glu354 (proton acceptor) is an active-site residue.

This sequence belongs to the class I-like SAM-binding methyltransferase superfamily. RNA M5U methyltransferase family. TrmA subfamily.

The catalysed reaction is uridine(54) in tRNA + S-adenosyl-L-methionine = 5-methyluridine(54) in tRNA + S-adenosyl-L-homocysteine + H(+). It catalyses the reaction uridine(341) in tmRNA + S-adenosyl-L-methionine = 5-methyluridine(341) in tmRNA + S-adenosyl-L-homocysteine + H(+). In terms of biological role, dual-specificity methyltransferase that catalyzes the formation of 5-methyluridine at position 54 (m5U54) in all tRNAs, and that of position 341 (m5U341) in tmRNA (transfer-mRNA). This Azoarcus sp. (strain BH72) protein is tRNA/tmRNA (uracil-C(5))-methyltransferase.